A 242-amino-acid polypeptide reads, in one-letter code: MPDEKLPQYNEVWNDLEKGCLHSCPSYSVNNHVNNPIVKQNSTLTQPSLRKKNTMAAPARLRKRSENVRLTQARYAIFHIFLPFILTLLLYHNFYNYFDQALADLNSVVKYVIETIVLIFTYVMTVIIVYFSFSLIKLAFEEAYVYAPSVAKANEGLAKHVAKTIAGLVKYVAKAIQGLAHIILSLLLFILGLEVIEQDEETGDVEMSSMRGQAITTEPASDNTMAEGTDCNTSKDVESGSS.

Transmembrane regions (helical) follow at residues Tyr75–Tyr95, Ile116–Ile136, and Ile176–Ile196. A disordered region spans residues Asp204 to Ser242. Over residues Met210–Asn232 the composition is skewed to polar residues. Positions Thr233 to Ser242 are enriched in basic and acidic residues.

It is found in the cytoplasm. The protein resides in the membrane. This is an uncharacterized protein from Schizosaccharomyces pombe (strain 972 / ATCC 24843) (Fission yeast).